A 274-amino-acid polypeptide reads, in one-letter code: Large ribosomal subunit protein uL2 (274 aa).

Disordered regions lie at residues 28–59 and 222–274; these read APYA…GGHK and GAAM…RRTK. Residues 39 to 49 are compositionally biased toward polar residues; that stretch reads KSGGRNNNGRI. The span at 229 to 239 shows a compositional bias: basic and acidic residues; it reads DHPHGGGEGRS.

The protein belongs to the universal ribosomal protein uL2 family. Part of the 50S ribosomal subunit. Forms a bridge to the 30S subunit in the 70S ribosome.

Its function is as follows. One of the primary rRNA binding proteins. Required for association of the 30S and 50S subunits to form the 70S ribosome, for tRNA binding and peptide bond formation. It has been suggested to have peptidyltransferase activity; this is somewhat controversial. Makes several contacts with the 16S rRNA in the 70S ribosome. In Marinomonas sp. (strain MWYL1), this protein is Large ribosomal subunit protein uL2.